Here is a 367-residue protein sequence, read N- to C-terminus: 2-aminoethylphosphonate--pyruvate transaminase (367 aa).

N6-(pyridoxal phosphate)lysine is present on lysine 193.

It belongs to the class-V pyridoxal-phosphate-dependent aminotransferase family. PhnW subfamily. Homodimer. Pyridoxal 5'-phosphate is required as a cofactor.

It catalyses the reaction (2-aminoethyl)phosphonate + pyruvate = phosphonoacetaldehyde + L-alanine. Its function is as follows. Involved in phosphonate degradation. This Vibrio parahaemolyticus serotype O3:K6 (strain RIMD 2210633) protein is 2-aminoethylphosphonate--pyruvate transaminase.